A 188-amino-acid chain; its full sequence is Elongation factor P-like protein (188 aa).

Belongs to the elongation factor P family.

This chain is Elongation factor P-like protein, found in Vibrio cholerae serotype O1 (strain ATCC 39541 / Classical Ogawa 395 / O395).